We begin with the raw amino-acid sequence, 437 residues long: ATP-dependent protease ATPase subunit HslU (437 aa).

ATP-binding positions include V18, 60–65 (GCGKTE), D250, E315, and R387.

Belongs to the ClpX chaperone family. HslU subfamily. In terms of assembly, a double ring-shaped homohexamer of HslV is capped on each side by a ring-shaped HslU homohexamer. The assembly of the HslU/HslV complex is dependent on binding of ATP.

Its subcellular location is the cytoplasm. In terms of biological role, ATPase subunit of a proteasome-like degradation complex; this subunit has chaperone activity. The binding of ATP and its subsequent hydrolysis by HslU are essential for unfolding of protein substrates subsequently hydrolyzed by HslV. HslU recognizes the N-terminal part of its protein substrates and unfolds these before they are guided to HslV for hydrolysis. This Methylobacterium sp. (strain 4-46) protein is ATP-dependent protease ATPase subunit HslU.